Reading from the N-terminus, the 183-residue chain is dCTP deaminase (183 aa).

DCTP is bound by residues 106-111 (KSTYAR), 130-132 (TLE), Gln-151, Tyr-165, and Gln-175. Catalysis depends on Glu-132, which acts as the Proton donor/acceptor.

Belongs to the dCTP deaminase family. Homotrimer.

It catalyses the reaction dCTP + H2O + H(+) = dUTP + NH4(+). The protein operates within pyrimidine metabolism; dUMP biosynthesis; dUMP from dCTP (dUTP route): step 1/2. Catalyzes the deamination of dCTP to dUTP. This chain is dCTP deaminase, found in Acidobacterium capsulatum (strain ATCC 51196 / DSM 11244 / BCRC 80197 / JCM 7670 / NBRC 15755 / NCIMB 13165 / 161).